The sequence spans 198 residues: Holliday junction branch migration complex subunit RuvA (198 aa).

A domain I region spans residues 1–63; the sequence is MYDYIKGQLT…EDAQLLFGFH (63 aa). Residues 64–142 form a domain II region; it reads SEEEKDVFLK…EAPKEESSKP (79 aa). A flexible linker region spans residues 143-147; sequence PKAKQ. Residues 148 to 198 form a domain III region; that stretch reads QGNEQLDEAVEALLALGYKATELKKIRAFFEGTSETAEQYIKSALKMLMKG.

It belongs to the RuvA family. As to quaternary structure, homotetramer. Forms an RuvA(8)-RuvB(12)-Holliday junction (HJ) complex. HJ DNA is sandwiched between 2 RuvA tetramers; dsDNA enters through RuvA and exits via RuvB. An RuvB hexamer assembles on each DNA strand where it exits the tetramer. Each RuvB hexamer is contacted by two RuvA subunits (via domain III) on 2 adjacent RuvB subunits; this complex drives branch migration. In the full resolvosome a probable DNA-RuvA(4)-RuvB(12)-RuvC(2) complex forms which resolves the HJ.

It localises to the cytoplasm. Its function is as follows. The RuvA-RuvB-RuvC complex processes Holliday junction (HJ) DNA during genetic recombination and DNA repair, while the RuvA-RuvB complex plays an important role in the rescue of blocked DNA replication forks via replication fork reversal (RFR). RuvA specifically binds to HJ cruciform DNA, conferring on it an open structure. The RuvB hexamer acts as an ATP-dependent pump, pulling dsDNA into and through the RuvAB complex. HJ branch migration allows RuvC to scan DNA until it finds its consensus sequence, where it cleaves and resolves the cruciform DNA. The protein is Holliday junction branch migration complex subunit RuvA of Streptococcus equi subsp. zooepidemicus (strain H70).